The primary structure comprises 218 residues: 3-dehydroquinate dehydratase (218 aa).

3-dehydroquinate is bound by residues 29–31 and Arg56; that span reads EFR. His116 (proton donor/acceptor) is an active-site residue. The Schiff-base intermediate with substrate role is filled by Lys142. Positions 180, 200, and 204 each coordinate 3-dehydroquinate.

This sequence belongs to the type-I 3-dehydroquinase family. In terms of assembly, homodimer.

It carries out the reaction 3-dehydroquinate = 3-dehydroshikimate + H2O. Its pathway is metabolic intermediate biosynthesis; chorismate biosynthesis; chorismate from D-erythrose 4-phosphate and phosphoenolpyruvate: step 3/7. Functionally, involved in the third step of the chorismate pathway, which leads to the biosynthesis of aromatic amino acids. Catalyzes the cis-dehydration of 3-dehydroquinate (DHQ) and introduces the first double bond of the aromatic ring to yield 3-dehydroshikimate. The protein is 3-dehydroquinate dehydratase of Methanococcus maripaludis (strain C6 / ATCC BAA-1332).